A 267-amino-acid polypeptide reads, in one-letter code: Probable tetrahydroxynaphthalene reductase MYCGRDRAFT_87994 (267 aa).

The NADP(+) site is built by Ile-26, Asp-72, Asn-99, and Arg-132. The Proton donor role is filled by Ser-149. 4 residues coordinate NADP(+): Tyr-163, Lys-167, Ile-196, and Thr-198. Tyr-163 acts as the Proton acceptor in catalysis. The Lowers pKa of active site Tyr role is filled by Lys-167.

The protein belongs to the short-chain dehydrogenases/reductases (SDR) family. In terms of assembly, homotetramer.

The catalysed reaction is scytalone + NADP(+) = naphthalene-1,3,6,8-tetrol + NADPH + H(+). The protein operates within pigment biosynthesis; melanin biosynthesis. In terms of biological role, probable tetrahydroxynaphthalene reductase; part of the gene cluster 29 that mediates the biosynthesis dihydroxynaphthalene (DHN)-melanin, a bluish-green pigment and a structural component of the conidial wall. Catalyzes the NADPH-dependent reduction of 1,3,6,8-tetrahydroxynaphthalene (T4HN) into (+)-scytalone. The protein is Probable tetrahydroxynaphthalene reductase MYCGRDRAFT_87994 of Zymoseptoria tritici (strain CBS 115943 / IPO323) (Speckled leaf blotch fungus).